The chain runs to 196 residues: Large ribosomal subunit protein uL5 (196 aa).

It belongs to the universal ribosomal protein uL5 family. In terms of assembly, part of the 50S ribosomal subunit; part of the 5S rRNA/L5/L18/L25 subcomplex. Contacts the 5S rRNA and the P site tRNA. Forms a bridge to the 30S subunit in the 70S ribosome.

Its function is as follows. This is one of the proteins that bind and probably mediate the attachment of the 5S RNA into the large ribosomal subunit, where it forms part of the central protuberance. In the 70S ribosome it contacts protein S13 of the 30S subunit (bridge B1b), connecting the 2 subunits; this bridge is implicated in subunit movement. Contacts the P site tRNA; the 5S rRNA and some of its associated proteins might help stabilize positioning of ribosome-bound tRNAs. This is Large ribosomal subunit protein uL5 from Rhodopirellula baltica (strain DSM 10527 / NCIMB 13988 / SH1).